The sequence spans 587 residues: GTPase-activating protein skywalker (587 aa).

2 residues coordinate a 1,2-diacyl-sn-glycero-3-phospho-(1D-myo-inositol): Lys-75 and Arg-79. In terms of domain architecture, Rab-GAP TBC spans 84 to 275 (PINSPIRAQL…RIMDCYFHEG (192 aa)). A 1,2-diacyl-sn-glycero-3-phospho-(1D-myo-inositol) is bound by residues Lys-277, Arg-281, and 335 to 339 (RGLST). The 178-residue stretch at 408–585 (TWTDRQFLFT…IRVLEVYGFV (178 aa)) folds into the TLDc domain.

In terms of tissue distribution, detected in the larval ventral nerve cord and neuromuscular junction boutons (at protein level).

The protein resides in the cytoplasmic vesicle. Its subcellular location is the secretory vesicle. The protein localises to the synaptic vesicle membrane. It localises to the endosome membrane. Its function is as follows. GTPase-activating protein (GAP) for Rab35 which regulates synaptic vesicle (SV) protein recycling and turnover at the neuromuscular junction boutons and possibly ventral nerve cord via endosomal trafficking. Inhibits Rab35-mediated endosomal sorting which traffics old or dysfunctional SV proteins through a degradative endolysosomal route that involves the ESCRT pathway and the HOPS complex members dor, vps39 and rab7. This function is essential for preventing excessive degradation and turnover of vesicles from the readily releasable pool which leads to increased neurotransmission and eventually neurodegeneration. Preferentially binds phosphoinositides phosphorylated at the D5 position of the inositol ring, such as phosphatidylinositol 4,5-bisphosphate (PIP2) and phosphatidylinositol 3,4,5-trisphosphate (PIP3). Binding to phosphoinositides and thus membrane-association, is required for its function in regulating the turnover of synaptic-vesicle proteins. It is therefore likely that it is recruited to vesicle membranes with high phosphoinositide content and thereby selectively prevents endolysosomal degradation of these vesicles. This chain is GTPase-activating protein skywalker, found in Drosophila melanogaster (Fruit fly).